Consider the following 223-residue polypeptide: Cytidylate kinase (223 aa).

10–18 (GPAGTGKSS) contributes to the ATP binding site.

The protein belongs to the cytidylate kinase family. Type 1 subfamily.

It is found in the cytoplasm. It catalyses the reaction CMP + ATP = CDP + ADP. The enzyme catalyses dCMP + ATP = dCDP + ADP. The chain is Cytidylate kinase from Mycobacterium leprae (strain Br4923).